Here is a 104-residue protein sequence, read N- to C-terminus: Large ribosomal subunit protein bL21 (104 aa).

It belongs to the bacterial ribosomal protein bL21 family. In terms of assembly, part of the 50S ribosomal subunit. Contacts protein L20.

Functionally, this protein binds to 23S rRNA in the presence of protein L20. In Streptococcus thermophilus (strain ATCC BAA-491 / LMD-9), this protein is Large ribosomal subunit protein bL21.